A 375-amino-acid polypeptide reads, in one-letter code: Peritrophin-48 (375 aa).

Residues 1-20 (MIIKTLLASVAIMLIATVNA) form the signal peptide. Chitin-binding type-2 domains follow at residues 25–83 (AKYC…NCIL), 86–143 (DNPC…SDDD), 153–210 (LNIC…MCER), 224–292 (ETLC…GCNR), and 294–360 (EYTT…ACQN). Cysteine 60 and cysteine 73 are joined by a disulfide. N-linked (GlcNAc...) asparagine glycosylation is present at asparagine 117. 4 disulfide bridges follow: cysteine 120/cysteine 133, cysteine 187/cysteine 200, cysteine 265/cysteine 278, and cysteine 330/cysteine 343. N-linked (GlcNAc...) asparagine glycosylation occurs at asparagine 360.

Post-translationally, glycosylated. In terms of tissue distribution, cardia and midgut peritrophic membrane.

In terms of biological role, may bind chitin or related oligosaccharide structures. The sequence is that of Peritrophin-48 from Lucilia cuprina (Green bottle fly).